Reading from the N-terminus, the 310-residue chain is MKASTSRAKLHPRNQHLNGYDLDLLTEQHPALSAFIITTPAGTKSIDFSDNKAVKTLNQALLKAHYNVDFWDIPQHNLCPPIPGRVDYIHYLADLLADDNQTQIPTGRQVKVLDIGTGANLVYPLTGGHEYNWHFTGTDIDPAAIKVAKQIAQFNNLKITLKQQKNAANIFKGVINSKDLYHLTLCNPPFHASSEDAVKGSERKWKNLGKAPSSTLNFGGQNNELWCEGGEVQFISNMIKESAAVAEQVMWFTSLVSKKDNIAALEQELKQHPIAQYKIVDMAQGQKVSRFIAWSYFDKATREQICEELE.

This sequence belongs to the methyltransferase superfamily. METTL16/RlmF family.

It localises to the cytoplasm. The enzyme catalyses adenosine(1618) in 23S rRNA + S-adenosyl-L-methionine = N(6)-methyladenosine(1618) in 23S rRNA + S-adenosyl-L-homocysteine + H(+). In terms of biological role, specifically methylates the adenine in position 1618 of 23S rRNA. This is Ribosomal RNA large subunit methyltransferase F from Pseudoalteromonas translucida (strain TAC 125).